The primary structure comprises 146 residues: MGEDGKLYIIREEILSDSLKKTLKVKELLESGKVKTINEAVKQVGISRSAFYKYRDYVFPFSKFSKGKIITLSMVLDHMPGVLSSILDVVANARGNVVTINQSMPSMGVASVTISIDTQYMEMSLENFLEKLSSQNGVRKIEILGE.

The ACT domain maps to 71–146; that stretch reads TLSMVLDHMP…GVRKIEILGE (76 aa).

This sequence belongs to the UPF0735 family.

This chain is UPF0735 ACT domain-containing protein Teth514_2312, found in Thermoanaerobacter sp. (strain X514).